The sequence spans 370 residues: Tyrosyl-DNA phosphodiesterase 2 (370 aa).

The residue at position 1 (methionine 1) is an N-acetylmethionine. A disordered region spans residues 1 to 32 (MASGSSSDAAEPAGPAGRAASAPEAAQAEEDR). Residues 9–26 (AAEPAGPAGRAASAPEAA) are compositionally biased toward low complexity. Lysine 34 participates in a covalent cross-link: Glycyl lysine isopeptide (Lys-Gly) (interchain with G-Cter in SUMO2). Residue threonine 99 is modified to Phosphothreonine; by ACVR1B. The tract at residues 130 to 134 (NIDGL) is interaction with 5' end of substrate DNA. Mg(2+) contacts are provided by aspartate 132 and glutamate 162. Residues 236–241 (HLESTR) form an interaction with 5' end of substrate DNA region. Aspartate 272 acts as the Proton donor/acceptor in catalysis. Interaction with 5' end of substrate DNA regions lie at residues 274-276 (NLR) and 315-321 (LRIPAAY).

Belongs to the CCR4/nocturin family. As to quaternary structure, interacts with TRAF2, TRAF3, TRAF5, TRAF6, TNFRSF8/CD30, TNFRSF5/CD40, TNFRSF1B/TNF-R75, ETS1, ETS2, FLI1, SMAD3 and ACVR1B/ALK4. Mg(2+) serves as cofactor. It depends on Mn(2+) as a cofactor. Post-translationally, ubiquitinated by TRAF6. Widely expressed. Expressed in whole brain, cerebellum, quiescent cortical astrocytes and cerebellar granule neurons.

Its subcellular location is the nucleus. The protein localises to the PML body. It is found in the nucleolus. It localises to the cytoplasm. In terms of biological role, DNA repair enzyme that can remove a variety of covalent adducts from DNA through hydrolysis of a 5'-phosphodiester bond, giving rise to DNA with a free 5' phosphate. Catalyzes the hydrolysis of dead-end complexes between DNA and the topoisomerase 2 (TOP2) active site tyrosine residue. The 5'-tyrosyl DNA phosphodiesterase activity can enable the repair of TOP2-induced DNA double-strand breaks/DSBs without the need for nuclease activity, creating a 'clean' DSB with 5'-phosphate termini that are ready for ligation. Thereby, protects the transcription of many genes involved in neurological development and maintenance from the abortive activity of TOP2. Hydrolyzes 5'-phosphoglycolates on protruding 5' ends on DSBs due to DNA damage by radiation and free radicals. Has preference for single-stranded DNA or duplex DNA with a 4 base pair overhang as substrate. Also has 3'-tyrosyl DNA phosphodiesterase activity, but less efficiently and much slower than TDP1. Constitutes the major if not only 5'-tyrosyl-DNA phosphodiesterase in cells. Also acts as an adapter by participating in the specific activation of MAP3K7/TAK1 in response to TGF-beta: associates with components of the TGF-beta receptor-TRAF6-TAK1 signaling module and promotes their ubiquitination dependent complex formation. Involved in non-canonical TGF-beta induced signaling routes. May also act as a negative regulator of ETS1 and may inhibit NF-kappa-B activation. Acts as a regulator of ribosome biogenesis following stress. In Mus musculus (Mouse), this protein is Tyrosyl-DNA phosphodiesterase 2 (Tdp2).